A 118-amino-acid polypeptide reads, in one-letter code: Large ribosomal subunit protein bL20 (118 aa).

This sequence belongs to the bacterial ribosomal protein bL20 family.

In terms of biological role, binds directly to 23S ribosomal RNA and is necessary for the in vitro assembly process of the 50S ribosomal subunit. It is not involved in the protein synthesizing functions of that subunit. The polypeptide is Large ribosomal subunit protein bL20 (Desulfovibrio desulfuricans (strain ATCC 27774 / DSM 6949 / MB)).